Here is a 419-residue protein sequence, read N- to C-terminus: Elongation factor Tu, chloroplastic (419 aa).

Positions 10-214 constitute a tr-type G domain; sequence KPHVNIGTIG…AVDSYIPTPK (205 aa). The G1 stretch occupies residues 19–26; sequence GHVDHGKT. 19–26 contacts GTP; sequence GHVDHGKT. Thr-26 serves as a coordination point for Mg(2+). The interval 60–64 is G2; it reads GITIN. The interval 81-84 is G3; it reads DCPG. Residues 81–85 and 136–139 each bind GTP; these read DCPGH and NKED. The G4 stretch occupies residues 136 to 139; sequence NKED. The segment at 174–176 is G5; sequence SAL.

It belongs to the TRAFAC class translation factor GTPase superfamily. Classic translation factor GTPase family. EF-Tu/EF-1A subfamily.

It localises to the plastid. Its subcellular location is the chloroplast. It catalyses the reaction GTP + H2O = GDP + phosphate + H(+). Functionally, GTP hydrolase that promotes the GTP-dependent binding of aminoacyl-tRNA to the A-site of ribosomes during protein biosynthesis. The sequence is that of Elongation factor Tu, chloroplastic (tufA) from Chara vulgaris (Common stonewort).